A 372-amino-acid chain; its full sequence is Cytochrome b (372 aa).

Transmembrane regions (helical) follow at residues 25 to 45 (FGSM…FLAI), 69 to 90 (WIIQ…YTHI), 105 to 125 (WLSG…GYVL), and 170 to 190 (FFAL…IHII). Heme b contacts are provided by His75 and His89. His174 and His188 together coordinate heme b. His193 contributes to the a ubiquinone binding site. Transmembrane regions (helical) follow at residues 218–238 (YKDT…MSFM), 280–300 (LGGT…PFTH), 312–332 (LTQI…WSAT), and 339–358 (FIFI…IINP).

It belongs to the cytochrome b family. As to quaternary structure, the cytochrome bc1 complex contains 3 respiratory subunits (MT-CYB, CYC1 and UQCRFS1), 2 core proteins (UQCRC1 and UQCRC2) and probably 6 low-molecular weight proteins. It depends on heme b as a cofactor.

Its subcellular location is the mitochondrion inner membrane. Functionally, component of the ubiquinol-cytochrome c reductase complex (complex III or cytochrome b-c1 complex) that is part of the mitochondrial respiratory chain. The b-c1 complex mediates electron transfer from ubiquinol to cytochrome c. Contributes to the generation of a proton gradient across the mitochondrial membrane that is then used for ATP synthesis. The protein is Cytochrome b (MT-CYB) of Hydrophis semperi (Lake Taal snake).